A 491-amino-acid chain; its full sequence is Eupatolide synthase (491 aa).

Residues 7-27 form a helical; Signal-anchor for type II membrane protein membrane-spanning segment; it reads LPSWLLPAVVILTISCILMLW. Residue C430 participates in heme binding.

This sequence belongs to the cytochrome P450 family. Heme serves as cofactor. As to expression, expressed in leaf primordia.

Its subcellular location is the membrane. The enzyme catalyses 8beta-hydroxygermacra-1(10),4,11(13)-trien-12-oate + reduced [NADPH--hemoprotein reductase] + O2 = eupatolide + oxidized [NADPH--hemoprotein reductase] + 2 H2O. It participates in secondary metabolite biosynthesis; terpenoid biosynthesis. Its function is as follows. Involved in the biosynthesis of germacrene-derived sesquiterpene lactones. Hydroxylates 8-beta-hydroxy-germacrene A acid to 6-alpha,8-beta-hydroxy-germacrene A acid, which, in turn, undergo spontaneous lactonization to become eupatolide. The polypeptide is Eupatolide synthase (Helianthus annuus (Common sunflower)).